A 220-amino-acid chain; its full sequence is HTH-type transcriptional repressor GlaR (220 aa).

One can recognise an HTH gntR-type domain in the interval 1–69 (MTITSLDGYR…NQKGYRVASM (69 aa)). Positions 29–48 (MSLLTSRYALGVGPLREALS) form a DNA-binding region, H-T-H motif.

The protein resides in the cytoplasm. Its activity is regulated as follows. The repressive effect at the glaH promoter site is specifically relieved upon glutarate binding. Negatively regulates the expression of the glaH-lhgD-gabDTP operon in a temporal manner during entry into stationary phase or during the first few hours of carbon starvation. Thereby is involved in the regulation of a L-lysine degradation pathway that proceeds via cadaverine, glutarate and L-2-hydroxyglutarate. Binds to two primary and two secondary sites in the promoter region of the glaH operon with the consensus sequences TTGTN5TTTT and ATGTN5TTTT of the primary sites, each separated by six nucleotides. The protein is HTH-type transcriptional repressor GlaR of Escherichia coli (strain K12).